The following is a 657-amino-acid chain: Macrolide export ATP-binding/permease protein MacB (657 aa).

The region spanning 5 to 242 is the ABC transporter domain; sequence LELLDVHRTY…RAVTGESAFD (238 aa). 41-48 contributes to the ATP binding site; sequence GASGSGKS. Transmembrane regions (helical) follow at residues 276–296, 538–558, 596–616, and 620–640; these read FLSV…MALG, IAAI…LVSV, IGVF…GWAV, and LLSV…FGLW.

It belongs to the ABC transporter superfamily. Macrolide exporter (TC 3.A.1.122) family. Homodimer.

The protein resides in the cell inner membrane. Functionally, non-canonical ABC transporter that contains transmembrane domains (TMD), which form a pore in the inner membrane, and an ATP-binding domain (NBD), which is responsible for energy generation. Confers resistance against macrolides. This chain is Macrolide export ATP-binding/permease protein MacB, found in Chlorobium phaeobacteroides (strain DSM 266 / SMG 266 / 2430).